Consider the following 247-residue polypeptide: MEWRDEGLIIGVRQYGEASVILEAMTRGHGRHLGLVRGGRSQRMRAVLQPGNSAELVWRARLDEQLGTWAIEPTQLRAATLMASAEALHAVGLICALLRLIAERDPHPDLYETAVLIAGHIGDERLAPLLVRLEIEILRETGFGLDLSRCAATGAREDLAYVSPKSGRAVSLAAGAPYRERLLPLPPFLRDEAPGGEPTPQDVLDGFGLTGFFLKRDVFTPRGQGMPEARRAYLAEFSKRQERSATE.

It belongs to the RecO family.

Involved in DNA repair and RecF pathway recombination. The sequence is that of DNA repair protein RecO from Methylocella silvestris (strain DSM 15510 / CIP 108128 / LMG 27833 / NCIMB 13906 / BL2).